A 256-amino-acid polypeptide reads, in one-letter code: Ubiquinone/menaquinone biosynthesis C-methyltransferase UbiE (256 aa).

Residues 1 to 12 (MNDQRKGDHAEP) are compositionally biased toward basic and acidic residues. The segment at 1–23 (MNDQRKGDHAEPTTHFGYQDVPE) is disordered. Residues Thr79, Asp100, and 128 to 129 (DA) contribute to the S-adenosyl-L-methionine site.

This sequence belongs to the class I-like SAM-binding methyltransferase superfamily. MenG/UbiE family.

The catalysed reaction is a 2-demethylmenaquinol + S-adenosyl-L-methionine = a menaquinol + S-adenosyl-L-homocysteine + H(+). It catalyses the reaction a 2-methoxy-6-(all-trans-polyprenyl)benzene-1,4-diol + S-adenosyl-L-methionine = a 5-methoxy-2-methyl-3-(all-trans-polyprenyl)benzene-1,4-diol + S-adenosyl-L-homocysteine + H(+). Its pathway is quinol/quinone metabolism; menaquinone biosynthesis; menaquinol from 1,4-dihydroxy-2-naphthoate: step 2/2. The protein operates within cofactor biosynthesis; ubiquinone biosynthesis. Functionally, methyltransferase required for the conversion of demethylmenaquinol (DMKH2) to menaquinol (MKH2) and the conversion of 2-polyprenyl-6-methoxy-1,4-benzoquinol (DDMQH2) to 2-polyprenyl-3-methyl-6-methoxy-1,4-benzoquinol (DMQH2). The sequence is that of Ubiquinone/menaquinone biosynthesis C-methyltransferase UbiE from Pseudomonas putida (strain GB-1).